The chain runs to 673 residues: Mechanosensitive ion channel protein 2, chloroplastic (673 aa).

A chloroplast-targeting transit peptide spans 1–75; that stretch reads MALYGTLQLS…SVPCRTTAFR (75 aa). Helical transmembrane passes span 107 to 127, 152 to 172, 193 to 213, 240 to 260, and 264 to 284; these read FPFVYKLVPAVALLVFSLWGL, YHVMTSYVQPLLLWLGALFIC, LNFVRSLSTVLAFAYCLSSLI, ALYSAVWVAAVSLFMELLGFS, and WLTAGGLGTVLITLAGREILT. A disordered region spans residues 492 to 673; sequence KINGEDKSKS…QPNSGASTEP (182 aa). Basic and acidic residues-rich tracts occupy residues 510-525, 564-576, and 617-642; these read AEQENKGSNPKSKETS, TPKDTETSGTEKP, and GSKRTLPIEEEIHSPPMETDAKELTG. Position 571 is a phosphoserine (Ser-571). Residues 661-673 are compositionally biased toward polar residues; the sequence is SQSQPNSGASTEP.

The protein belongs to the MscS (TC 1.A.23) family. As to expression, widely expressed.

It localises to the plastid. Its subcellular location is the chloroplast membrane. Functionally, mechanosensitive channel that opens in response to stretch forces in the membrane lipid bilayer. Controls plastid size, shape, and perhaps division during normal plant development by altering ion flux in response to changes in membrane tension. Acts as a component of the chloroplast division machinery. The sequence is that of Mechanosensitive ion channel protein 2, chloroplastic (MSL2) from Arabidopsis thaliana (Mouse-ear cress).